Consider the following 70-residue polypeptide: NAD(P)H-quinone oxidoreductase subunit L (70 aa).

Helical transmembrane passes span 2 to 22 (IVPL…PVAL) and 39 to 59 (TFMY…SPFV).

It belongs to the complex I NdhL subunit family. NDH-1 can be composed of about 15 different subunits; different subcomplexes with different compositions have been identified which probably have different functions.

The protein localises to the cellular thylakoid membrane. The enzyme catalyses a plastoquinone + NADH + (n+1) H(+)(in) = a plastoquinol + NAD(+) + n H(+)(out). It carries out the reaction a plastoquinone + NADPH + (n+1) H(+)(in) = a plastoquinol + NADP(+) + n H(+)(out). NDH-1 shuttles electrons from an unknown electron donor, via FMN and iron-sulfur (Fe-S) centers, to quinones in the respiratory and/or the photosynthetic chain. The immediate electron acceptor for the enzyme in this species is believed to be plastoquinone. Couples the redox reaction to proton translocation, and thus conserves the redox energy in a proton gradient. Cyanobacterial NDH-1 also plays a role in inorganic carbon-concentration. The chain is NAD(P)H-quinone oxidoreductase subunit L from Trichormus variabilis (strain ATCC 29413 / PCC 7937) (Anabaena variabilis).